The following is a 206-amino-acid chain: Imidazoleglycerol-phosphate dehydratase (206 aa).

The segment at 1-21 (MTALDSSRLLQPRTASVHRRT) is disordered.

This sequence belongs to the imidazoleglycerol-phosphate dehydratase family.

The protein resides in the cytoplasm. It catalyses the reaction D-erythro-1-(imidazol-4-yl)glycerol 3-phosphate = 3-(imidazol-4-yl)-2-oxopropyl phosphate + H2O. It participates in amino-acid biosynthesis; L-histidine biosynthesis; L-histidine from 5-phospho-alpha-D-ribose 1-diphosphate: step 6/9. The polypeptide is Imidazoleglycerol-phosphate dehydratase (Synechococcus sp. (strain JA-2-3B'a(2-13)) (Cyanobacteria bacterium Yellowstone B-Prime)).